The chain runs to 297 residues: SH2 domain-containing protein 6 (297 aa).

Disordered regions lie at residues Met1 to Arg61 and Met74 to Ser93. Positions Pro36–Gln45 are enriched in pro residues. An SH2 domain is found at Trp187–Thr295.

The protein is SH2 domain-containing protein 6 (Sh2d6) of Mus musculus (Mouse).